Reading from the N-terminus, the 173-residue chain is NADH-ubiquinone oxidoreductase chain 6 (173 aa).

Helical transmembrane passes span 1–21, 27–47, 48–68, 88–108, and 139–159; these read MTYL…AVAS, YGVV…LSLG, VSFV…VVFV, VGYG…GGLI, and YGVG…FVVL.

The protein belongs to the complex I subunit 6 family.

It localises to the mitochondrion membrane. It catalyses the reaction a ubiquinone + NADH + 5 H(+)(in) = a ubiquinol + NAD(+) + 4 H(+)(out). Its function is as follows. Core subunit of the mitochondrial membrane respiratory chain NADH dehydrogenase (Complex I) that is believed to belong to the minimal assembly required for catalysis. Complex I functions in the transfer of electrons from NADH to the respiratory chain. The immediate electron acceptor for the enzyme is believed to be ubiquinone. The sequence is that of NADH-ubiquinone oxidoreductase chain 6 (MT-ND6) from Calidris maritima (Purple sandpiper).